Consider the following 503-residue polypeptide: Cytochrome P450 714C1 (503 aa).

Residues 1-6 (MEKLLA) lie on the Lumenal side of the membrane. A helical; Signal-anchor for type III membrane protein transmembrane segment spans residues 7 to 27 (LIVVLVILLSLALFYLCNILW). The Cytoplasmic segment spans residues 28 to 503 (LRAVKIRKKL…GLPLMVTKLP (476 aa)). Cys450 contributes to the heme binding site.

It belongs to the cytochrome P450 family. The cofactor is heme.

It localises to the membrane. Functionally, probably not involved in gibberellin metabolism since over-expression of CYP714C1 in a heterologous system does not induce semi-dwarfism. In Oryza sativa subsp. japonica (Rice), this protein is Cytochrome P450 714C1 (CYP714C1).